The following is a 283-amino-acid chain: Elongation factor Ts (283 aa).

The segment at 80-83 (TDFV) is involved in Mg(2+) ion dislocation from EF-Tu.

This sequence belongs to the EF-Ts family.

The protein localises to the cytoplasm. Its function is as follows. Associates with the EF-Tu.GDP complex and induces the exchange of GDP to GTP. It remains bound to the aminoacyl-tRNA.EF-Tu.GTP complex up to the GTP hydrolysis stage on the ribosome. The sequence is that of Elongation factor Ts from Actinobacillus pleuropneumoniae serotype 3 (strain JL03).